We begin with the raw amino-acid sequence, 2065 residues long: Cytoskeleton-associated protein 5-A (2065 aa).

TOG stretches follow at residues 1 to 240 (MGDD…DLKA) and 264 to 515 (VDAY…KETK). HEAT repeat units follow at residues 120 to 157 (EKAE…EFGS), 160 to 197 (MTLK…WIRD), 270 to 311 (LEAV…NPKI), 314 to 352 (GDFA…GLRK), 356 to 393 (SYAG…TTTL), 395 to 432 (NISE…STLP), and 436 to 477 (LKPF…VNPF). The tract at residues 500–574 (NGKKGGAAAG…GATAKGKKAV (75 aa)) is disordered. The span at 538–568 (KAAAAPKKAPAAKPGGPVKKAKAPASSGATA) shows a compositional bias: low complexity. The tract at residues 644 to 808 (KPGFKETNFQ…LSQIDAEFEK (165 aa)) is TOG 3. HEAT repeat units follow at residues 652–689 (FQVM…KVGD) and 748–785 (INVK…YMGA). The tract at residues 809 to 849 (MKGQTPPVSIRGSKHGSGRDEGEEGEEQDEDAPADVTDLLP) is disordered. The segment covering 829 to 841 (EGEEGEEQDEDAP) has biased composition (acidic residues). Residues 846-1090 (DLLPRTDISD…AGPPGKASSK (245 aa)) are TOG 4. 4 HEAT repeats span residues 852 to 889 (DISD…EAKF), 892 to 929 (PSIG…AMGH), 933 to 970 (QHVK…QTGM), and 1015 to 1052 (CVPY…KMSK). The segment covering 1074 to 1115 (ASMPAKPAGPPGKASSKQPPAVAQASASPPPAASSDSGSSTS) has biased composition (low complexity). The segment at 1074-1192 (ASMPAKPAGP…AKDEEDKSGP (119 aa)) is disordered. Polar residues predominate over residues 1126–1163 (PGTQASKAKTQSVSSEGNTSLNPSNTSLTPSKANTSLS). Positions 1150 to 1235 (NTSLTPSKAN…IEQLKTQMSP (86 aa)) are interaction with microtubule lattice. Residues 1191-1460 (GPIYIIVPNG…ERIKRAGKKQ (270 aa)) are TOG 5. HEAT repeat units follow at residues 1251 to 1288 (QRQI…RFFD), 1295 to 1318 (MKCL…LTEM), 1319 to 1355 (EGTS…VYPA), 1357 to 1390 (KMFN…SYGM), and 1395 to 1432 (PTPA…VHGE). Disordered regions lie at residues 1982–2001 (DNAK…KSSA) and 2028–2065 (VELD…SSRK). An interaction with tacc3 region spans residues 2002–2065 (PAVVSSTDML…RLERIKSSRK (64 aa)). Over residues 2038–2048 (STTTSSSASST) the composition is skewed to low complexity. The segment covering 2051-2065 (DDLKKRLERIKSSRK) has biased composition (basic and acidic residues).

The protein belongs to the TOG/XMAP215 family. As to quaternary structure, interacts with tacc3; two molecules of ckap5 interact with 1 molecule of tacc3 probably mediated by coiled coil domains forming a four-helix bundle. Interacts with tacc3 and clathrin forming the TACC3/ch-TOG/clathrin complex located at spindle inter-microtubules bridges. Interacts with ndc80; indicative for an association with the NDC80 comnplex.

The protein resides in the cytoplasm. The protein localises to the cytoskeleton. It localises to the spindle pole. It is found in the spindle. Its subcellular location is the microtubule organizing center. The protein resides in the centrosome. The protein localises to the chromosome. It localises to the centromere. It is found in the kinetochore. Its function is as follows. Binds to the plus end of microtubules and regulates microtubule dynamics and microtubule organization. Acts as a processive microtubule polymerase. Promotes cytoplasmic microtubule nucleation and elongation. Plays a major role in organizing spindle poles. In spindle formation protects kinetochore microtubules from depolymerization by kif2c and has an essential role in centrosomal microtubule assembly independently of kif2c activity. Contributes to centrosome integrity. Acts as a component of the TACC3/ch-TOG/clathrin complex proposed to contribute to stabilization of kinetochore fibers of the mitotic spindle by acting as inter-microtubule bridge. Enhances the strength of NDC80 complex-mediated kinetochore-tip microtubule attachments. In Xenopus laevis (African clawed frog), this protein is Cytoskeleton-associated protein 5-A (ckap5-a).